Consider the following 181-residue polypeptide: Peptidyl-tRNA hydrolase (181 aa).

Residue Tyr-14 participates in tRNA binding. The Proton acceptor role is filled by His-19. TRNA-binding residues include Tyr-62, Asn-64, and Asn-108.

Belongs to the PTH family. As to quaternary structure, monomer.

The protein localises to the cytoplasm. It carries out the reaction an N-acyl-L-alpha-aminoacyl-tRNA + H2O = an N-acyl-L-amino acid + a tRNA + H(+). Its function is as follows. Hydrolyzes ribosome-free peptidyl-tRNAs (with 1 or more amino acids incorporated), which drop off the ribosome during protein synthesis, or as a result of ribosome stalling. Catalyzes the release of premature peptidyl moieties from peptidyl-tRNA molecules trapped in stalled 50S ribosomal subunits, and thus maintains levels of free tRNAs and 50S ribosomes. This is Peptidyl-tRNA hydrolase from Campylobacter jejuni subsp. doylei (strain ATCC BAA-1458 / RM4099 / 269.97).